The chain runs to 332 residues: L-lactate dehydrogenase A chain (332 aa).

N-acetylalanine is present on Ala2. Lys5 carries the N6-acetyllysine; alternate modification. Lys5 bears the N6-succinyllysine; alternate mark. Residue Lys14 is modified to N6-acetyllysine. NAD(+) is bound at residue 29-57 (GAVGMACAISILMKDLADEVALVDVMEDK). At Lys57 the chain carries N6-acetyllysine; alternate. Lys57 is covalently cross-linked (Glycyl lysine isopeptide (Lys-Gly) (interchain with G-Cter in SUMO2); alternate). Lys81 carries the post-translational modification N6-acetyllysine. Arg106 contacts substrate. Lys118 is subject to N6-acetyllysine; alternate. Lys118 carries the N6-succinyllysine; alternate modification. Lys126 is subject to N6-acetyllysine. Asn138 contacts NAD(+). The substrate site is built by Asn138 and Arg169. The active-site Proton acceptor is the His193. An N6-acetyllysine mark is found at Lys224 and Lys232. Tyr239 carries the phosphotyrosine modification. Lys243 is modified (N6-acetyllysine). Thr248 contributes to the substrate binding site. The residue at position 309 (Thr309) is a Phosphothreonine. Lys318 is subject to N6-acetyllysine; alternate. Lys318 bears the N6-succinyllysine; alternate mark. Position 322 is a phosphothreonine (Thr322).

This sequence belongs to the LDH/MDH superfamily. LDH family. In terms of assembly, homotetramer. Interacts with PTEN upstream reading frame protein MP31. In terms of processing, ISGylated.

The protein localises to the cytoplasm. It catalyses the reaction (S)-lactate + NAD(+) = pyruvate + NADH + H(+). It functions in the pathway fermentation; pyruvate fermentation to lactate; (S)-lactate from pyruvate: step 1/1. Functionally, interconverts simultaneously and stereospecifically pyruvate and lactate with concomitant interconversion of NADH and NAD(+). In Bos mutus grunniens (Wild yak), this protein is L-lactate dehydrogenase A chain (LDHA).